A 371-amino-acid chain; its full sequence is Protein RecA (371 aa).

Residue 75–82 participates in ATP binding; it reads GPESSGKT. The segment at 343-371 is disordered; the sequence is KAKDEPIADEDQPIDVVPNFDDQDVEPQN.

This sequence belongs to the RecA family.

The protein resides in the cytoplasm. Can catalyze the hydrolysis of ATP in the presence of single-stranded DNA, the ATP-dependent uptake of single-stranded DNA by duplex DNA, and the ATP-dependent hybridization of homologous single-stranded DNAs. It interacts with LexA causing its activation and leading to its autocatalytic cleavage. This is Protein RecA from Corynebacterium urealyticum (strain ATCC 43042 / DSM 7109).